Reading from the N-terminus, the 648-residue chain is NADP-dependent malic enzyme, chloroplastic (648 aa).

Residues 1–61 constitute a chloroplast transit peptide; the sequence is MISLNSSFLE…VDSAVRDVNA (61 aa). The active-site Proton donor is the Y195. NAD(+) is bound at residue R248. K266 acts as the Proton acceptor in catalysis. Positions 339, 340, and 363 each coordinate a divalent metal cation. D363 provides a ligand contact to NAD(+). NADP(+) is bound at residue 392 to 408; the sequence is LFLGAGEAGTGIAELIA. N504 contacts NAD(+).

The protein belongs to the malic enzymes family. As to quaternary structure, homotetramer. The cofactor is Mg(2+). It depends on Mn(2+) as a cofactor.

The protein resides in the plastid. It is found in the chloroplast. The catalysed reaction is (S)-malate + NADP(+) = pyruvate + CO2 + NADPH. It catalyses the reaction oxaloacetate + H(+) = pyruvate + CO2. It functions in the pathway photosynthesis; C4 acid pathway. In terms of biological role, the chloroplastic ME isoform decarboxylates malate shuttled from neighboring mesophyll cells. The CO(2) released is then refixed by ribulose-bisphosphate carboxylase. This pathway eliminates the photorespiratory loss of CO(2) that occurs in most plants. This is NADP-dependent malic enzyme, chloroplastic (MOD1) from Flaveria trinervia (Clustered yellowtops).